Here is a 120-residue protein sequence, read N- to C-terminus: Large ribosomal subunit protein bL12 (120 aa).

It belongs to the bacterial ribosomal protein bL12 family. Homodimer. Part of the ribosomal stalk of the 50S ribosomal subunit. Forms a multimeric L10(L12)X complex, where L10 forms an elongated spine to which 2 to 4 L12 dimers bind in a sequential fashion. Binds GTP-bound translation factors.

In terms of biological role, forms part of the ribosomal stalk which helps the ribosome interact with GTP-bound translation factors. Is thus essential for accurate translation. The protein is Large ribosomal subunit protein bL12 of Listeria monocytogenes serotype 4b (strain CLIP80459).